The sequence spans 324 residues: Phospho-N-acetylmuramoyl-pentapeptide-transferase (324 aa).

Helical transmembrane passes span 13–33 (VLSA…IFIP), 57–77 (GTPT…MLII), 85–105 (GMIV…DDIL), 121–141 (MILL…NIGT), 143–163 (IIIP…PLVV), 179–199 (IDGL…IVGF), 201–221 (TGHY…LGFL), 238–260 (LALG…IIIV), and 303–323 (VKLV…GFIA).

The protein belongs to the glycosyltransferase 4 family. MraY subfamily. Requires Mg(2+) as cofactor.

The protein localises to the cell membrane. The catalysed reaction is UDP-N-acetyl-alpha-D-muramoyl-L-alanyl-gamma-D-glutamyl-meso-2,6-diaminopimeloyl-D-alanyl-D-alanine + di-trans,octa-cis-undecaprenyl phosphate = di-trans,octa-cis-undecaprenyl diphospho-N-acetyl-alpha-D-muramoyl-L-alanyl-D-glutamyl-meso-2,6-diaminopimeloyl-D-alanyl-D-alanine + UMP. It functions in the pathway cell wall biogenesis; peptidoglycan biosynthesis. Functionally, catalyzes the initial step of the lipid cycle reactions in the biosynthesis of the cell wall peptidoglycan: transfers peptidoglycan precursor phospho-MurNAc-pentapeptide from UDP-MurNAc-pentapeptide onto the lipid carrier undecaprenyl phosphate, yielding undecaprenyl-pyrophosphoryl-MurNAc-pentapeptide, known as lipid I. The polypeptide is Phospho-N-acetylmuramoyl-pentapeptide-transferase (Clostridium botulinum (strain Eklund 17B / Type B)).